A 637-amino-acid polypeptide reads, in one-letter code: Galactofuranosyltransferase GlfT2 (637 aa).

Residues arginine 171, glutamine 200, asparagine 229, and aspartate 256 each contribute to the UDP-alpha-D-galactofuranose site. The Mn(2+) site is built by aspartate 256 and aspartate 258. The active-site Proton acceptor is aspartate 372. Mn(2+) is bound at residue histidine 396.

It belongs to the glycosyltransferase 2 family. Homotetramer. It depends on Mn(2+) as a cofactor. The cofactor is Mg(2+).

The protein resides in the cell membrane. It catalyses the reaction beta-D-galactofuranosyl-(1-&gt;5)-beta-D-galactofuranosyl-(1-&gt;4)-alpha-L-rhamnosyl-(1-&gt;3)-N-acetyl-alpha-D-glucosaminyl-diphospho-trans,octa-cis-decaprenol + 28 UDP-alpha-D-galactofuranose = [beta-D-galactofuranosyl-(1-&gt;5)-beta-D-galactofuranosyl-(1-&gt;6)]14-beta-D-galactofuranosyl-(1-&gt;5)-beta-D-galactofuranosyl-(1-&gt;4)-alpha-L-rhamnopyranosyl-(1-&gt;3)-N-acetyl-alpha-D-glucosaminyl-diphospho-trans,octa-cis-decaprenol + 28 UDP + 28 H(+). It participates in cell wall biogenesis; cell wall polysaccharide biosynthesis. Involved in the galactan polymerization of the arabinogalactan (AG) region of the mycolylarabinogalactan-peptidoglycan (mAGP) complex, an essential component of the mycobacteria cell wall. Thus, successively transfers approximately 28 galactofuranosyl (Galf) residues from UDP-galactofuranose (UDP-Galf) onto the galactofuranosyl-galactofuranosyl-rhamnosyl-GlcNAc-diphospho-decaprenol (Galf-Galf-Rha-GlcNAc-PP-C50) acceptor produced by GlfT1, with alternating 1-&gt;5 and 1-&gt;6 links, forming a galactan domain with approximately 30 galactofuranosyl residues. The sequence is that of Galactofuranosyltransferase GlfT2 from Mycobacterium tuberculosis (strain ATCC 25618 / H37Rv).